We begin with the raw amino-acid sequence, 324 residues long: Heat-inducible transcription repressor HrcA (324 aa).

Belongs to the HrcA family.

Functionally, negative regulator of class I heat shock genes (grpE-dnaK-dnaJ and groELS operons). Prevents heat-shock induction of these operons. The polypeptide is Heat-inducible transcription repressor HrcA (Synechococcus sp. (strain CC9902)).